Reading from the N-terminus, the 185-residue chain is MIDEALFDAEEKMEKAVAVARDDLSTIRTGRANPGMFSRIVIDYYGAATPITQLASINVPEARLVVIKPYEASQVGAIETAIRNSDLGVNPTNDGTLIRVAVPQLTEERRRELVKQAKSKGEDAKVSVRNIRRKAMEELHRIRKDGEAGEDEVGRAEKDLDKTTHQYITQIDELVKHKEGELLEV.

The protein belongs to the RRF family.

It is found in the cytoplasm. Its function is as follows. Responsible for the release of ribosomes from messenger RNA at the termination of protein biosynthesis. May increase the efficiency of translation by recycling ribosomes from one round of translation to another. The protein is Ribosome-recycling factor of Mycobacterium avium (strain 104).